The sequence spans 209 residues: Large ribosomal subunit protein uL3 (209 aa).

This sequence belongs to the universal ribosomal protein uL3 family. As to quaternary structure, part of the 50S ribosomal subunit. Forms a cluster with proteins L14 and L19.

Functionally, one of the primary rRNA binding proteins, it binds directly near the 3'-end of the 23S rRNA, where it nucleates assembly of the 50S subunit. The protein is Large ribosomal subunit protein uL3 of Desulfotalea psychrophila (strain LSv54 / DSM 12343).